The chain runs to 453 residues: Bifunctional protein GlmU (453 aa).

The segment at 1–227 (MNKLSVVILA…LMEVEGVNNR (227 aa)) is pyrophosphorylase. UDP-N-acetyl-alpha-D-glucosamine is bound by residues 9–12 (LAAG), lysine 23, glutamine 74, 79–80 (GT), 101–103 (YGD), glycine 138, glutamate 152, asparagine 167, and asparagine 225. Position 103 (aspartate 103) interacts with Mg(2+). Asparagine 225 is a Mg(2+) binding site. The segment at 228 to 248 (LQLANLERHFQRKQVEKLLLA) is linker. The N-acetyltransferase stretch occupies residues 249–453 (GVTFADPARF…ISNWQRPKRK (205 aa)). Arginine 331 and lysine 349 together coordinate UDP-N-acetyl-alpha-D-glucosamine. The active-site Proton acceptor is the histidine 361. Positions 364 and 375 each coordinate UDP-N-acetyl-alpha-D-glucosamine. Residues alanine 378, 384–385 (NY), serine 403, alanine 421, and arginine 438 contribute to the acetyl-CoA site.

In the N-terminal section; belongs to the N-acetylglucosamine-1-phosphate uridyltransferase family. It in the C-terminal section; belongs to the transferase hexapeptide repeat family. In terms of assembly, homotrimer. The cofactor is Mg(2+).

Its subcellular location is the cytoplasm. It carries out the reaction alpha-D-glucosamine 1-phosphate + acetyl-CoA = N-acetyl-alpha-D-glucosamine 1-phosphate + CoA + H(+). The enzyme catalyses N-acetyl-alpha-D-glucosamine 1-phosphate + UTP + H(+) = UDP-N-acetyl-alpha-D-glucosamine + diphosphate. It functions in the pathway nucleotide-sugar biosynthesis; UDP-N-acetyl-alpha-D-glucosamine biosynthesis; N-acetyl-alpha-D-glucosamine 1-phosphate from alpha-D-glucosamine 6-phosphate (route II): step 2/2. The protein operates within nucleotide-sugar biosynthesis; UDP-N-acetyl-alpha-D-glucosamine biosynthesis; UDP-N-acetyl-alpha-D-glucosamine from N-acetyl-alpha-D-glucosamine 1-phosphate: step 1/1. Its pathway is bacterial outer membrane biogenesis; LPS lipid A biosynthesis. Catalyzes the last two sequential reactions in the de novo biosynthetic pathway for UDP-N-acetylglucosamine (UDP-GlcNAc). The C-terminal domain catalyzes the transfer of acetyl group from acetyl coenzyme A to glucosamine-1-phosphate (GlcN-1-P) to produce N-acetylglucosamine-1-phosphate (GlcNAc-1-P), which is converted into UDP-GlcNAc by the transfer of uridine 5-monophosphate (from uridine 5-triphosphate), a reaction catalyzed by the N-terminal domain. This is Bifunctional protein GlmU from Histophilus somni (strain 129Pt) (Haemophilus somnus).